A 193-amino-acid polypeptide reads, in one-letter code: Probable chemoreceptor glutamine deamidase CheD 1 (193 aa).

Positions 1-26 (MPHTPPAYPAASADHRPPSSPPAEPA) are disordered.

Belongs to the CheD family.

It catalyses the reaction L-glutaminyl-[protein] + H2O = L-glutamyl-[protein] + NH4(+). In terms of biological role, probably deamidates glutamine residues to glutamate on methyl-accepting chemotaxis receptors (MCPs), playing an important role in chemotaxis. This Chromobacterium violaceum (strain ATCC 12472 / DSM 30191 / JCM 1249 / CCUG 213 / NBRC 12614 / NCIMB 9131 / NCTC 9757 / MK) protein is Probable chemoreceptor glutamine deamidase CheD 1.